The following is a 274-amino-acid chain: HTH-type transcriptional regulator GadX (274 aa).

The HTH araC/xylS-type domain maps to 145–242 (TRVCTVINNN…GMTPTEYQER (98 aa)). 2 DNA-binding regions (H-T-H motif) span residues 162–183 (ARIASELLMSPSLLKKKLREEE) and 209–232 (IKRVAVSCGYHSVSYFIYVFRNYY).

As to quaternary structure, homodimer.

Positively regulates the expression of about fifteen genes involved in acid resistance such as gadA, gadB and gadC. Depending on the conditions (growth phase and medium), can repress gadW. The chain is HTH-type transcriptional regulator GadX (gadX) from Escherichia coli O157:H7.